The sequence spans 189 residues: Large ribosomal subunit protein bL9 (189 aa).

The protein belongs to the bacterial ribosomal protein bL9 family.

In terms of biological role, binds to the 23S rRNA. This chain is Large ribosomal subunit protein bL9, found in Brucella anthropi (strain ATCC 49188 / DSM 6882 / CCUG 24695 / JCM 21032 / LMG 3331 / NBRC 15819 / NCTC 12168 / Alc 37) (Ochrobactrum anthropi).